We begin with the raw amino-acid sequence, 322 residues long: NADH-quinone oxidoreductase subunit H (322 aa).

The next 8 helical transmembrane spans lie at 15-35, 81-101, 114-134, 149-169, 184-204, 237-257, 265-285, and 299-319; these read IFQSIVILVCVLITASIMSVV, ITFLIAPILAFISLLLVITII, IGVLFFLMMASLSVYSVLLAG, ATAQTLSYEVFLGLSCMGVVA, IGLWNIIPQFFGFLAFFIAGL, FFIGEYISIIVVSSLISTMFF, FPSYFWFILKTLCFMMIFILI, and LFGWKVCFPLTLINLIFTALI.

It belongs to the complex I subunit 1 family. In terms of assembly, NDH-1 is composed of 13 different subunits. Subunits NuoA, H, J, K, L, M, N constitute the membrane sector of the complex.

Its subcellular location is the cell membrane. It carries out the reaction a quinone + NADH + 5 H(+)(in) = a quinol + NAD(+) + 4 H(+)(out). In terms of biological role, NDH-1 shuttles electrons from NADH, via FMN and iron-sulfur (Fe-S) centers, to quinones in the respiratory chain. The immediate electron acceptor for the enzyme in this species is believed to be ubiquinone. Couples the redox reaction to proton translocation (for every two electrons transferred, four hydrogen ions are translocated across the cytoplasmic membrane), and thus conserves the redox energy in a proton gradient. This subunit may bind ubiquinone. In Buchnera aphidicola subsp. Baizongia pistaciae (strain Bp), this protein is NADH-quinone oxidoreductase subunit H.